Consider the following 125-residue polypeptide: Small ribosomal subunit protein uS13 (125 aa).

The segment at 101–125 is disordered; sequence QRTKTNARTRKGKRKTVANKKIAAK.

This sequence belongs to the universal ribosomal protein uS13 family. Part of the 30S ribosomal subunit. Forms a loose heterodimer with protein S19. Forms two bridges to the 50S subunit in the 70S ribosome.

In terms of biological role, located at the top of the head of the 30S subunit, it contacts several helices of the 16S rRNA. In the 70S ribosome it contacts the 23S rRNA (bridge B1a) and protein L5 of the 50S subunit (bridge B1b), connecting the 2 subunits; these bridges are implicated in subunit movement. Contacts the tRNAs in the A and P-sites. The polypeptide is Small ribosomal subunit protein uS13 (Borrelia duttonii (strain Ly)).